We begin with the raw amino-acid sequence, 943 residues long: Isoleucine--tRNA ligase (943 aa).

Residues 59–69 (PYANGQIHLGH) carry the 'HIGH' region motif. Glu-577 lines the L-isoleucyl-5'-AMP pocket. The 'KMSKS' region signature appears at 618–622 (KMSKS). Lys-621 serves as a coordination point for ATP. Positions 906, 909, 926, and 929 each coordinate Zn(2+).

The protein belongs to the class-I aminoacyl-tRNA synthetase family. IleS type 1 subfamily. As to quaternary structure, monomer. It depends on Zn(2+) as a cofactor.

The protein localises to the cytoplasm. It catalyses the reaction tRNA(Ile) + L-isoleucine + ATP = L-isoleucyl-tRNA(Ile) + AMP + diphosphate. Functionally, catalyzes the attachment of isoleucine to tRNA(Ile). As IleRS can inadvertently accommodate and process structurally similar amino acids such as valine, to avoid such errors it has two additional distinct tRNA(Ile)-dependent editing activities. One activity is designated as 'pretransfer' editing and involves the hydrolysis of activated Val-AMP. The other activity is designated 'posttransfer' editing and involves deacylation of mischarged Val-tRNA(Ile). The chain is Isoleucine--tRNA ligase from Xylella fastidiosa (strain M23).